A 409-amino-acid chain; its full sequence is Ribose-phosphate pyrophosphokinase 3, chloroplastic (409 aa).

Low complexity-rich tracts occupy residues 1-16 (MATA…PAAA) and 34-43 (PASAFARPSP). The disordered stretch occupies residues 1-43 (MATAASASASASPAAAFGAKTRRPGPSPSPSPSPASAFARPSP). Residues 1-44 (MATAASASASASPAAAFGAKTRRPGPSPSPSPSPASAFARPSPR) constitute a chloroplast transit peptide. Residues Asp-229 and His-231 each coordinate Mg(2+). Positions 312–327 (GRHVVIVDDLVQSGGT) are binding of phosphoribosylpyrophosphate.

This sequence belongs to the ribose-phosphate pyrophosphokinase family. The cofactor is Mg(2+).

Its subcellular location is the plastid. It is found in the chloroplast. It carries out the reaction D-ribose 5-phosphate + ATP = 5-phospho-alpha-D-ribose 1-diphosphate + AMP + H(+). The protein is Ribose-phosphate pyrophosphokinase 3, chloroplastic of Oryza sativa subsp. japonica (Rice).